We begin with the raw amino-acid sequence, 311 residues long: Porphobilinogen deaminase (311 aa).

Cysteine 242 carries the post-translational modification S-(dipyrrolylmethanemethyl)cysteine.

Belongs to the HMBS family. Monomer. Dipyrromethane serves as cofactor.

The catalysed reaction is 4 porphobilinogen + H2O = hydroxymethylbilane + 4 NH4(+). Its pathway is porphyrin-containing compound metabolism; protoporphyrin-IX biosynthesis; coproporphyrinogen-III from 5-aminolevulinate: step 2/4. Functionally, tetrapolymerization of the monopyrrole PBG into the hydroxymethylbilane pre-uroporphyrinogen in several discrete steps. This chain is Porphobilinogen deaminase, found in Baumannia cicadellinicola subsp. Homalodisca coagulata.